The primary structure comprises 347 residues: Hydroxymethylglutaryl-CoA synthase (347 aa).

Residues aspartate 29 and alanine 30 each contribute to the (3S)-3-hydroxy-3-methylglutaryl-CoA site. Glutamate 80 acts as the Proton donor/acceptor in catalysis. Cysteine 112 and threonine 153 together coordinate (3S)-3-hydroxy-3-methylglutaryl-CoA. Cysteine 112 acts as the Acyl-thioester intermediate in catalysis. CoA is bound at residue arginine 199. Residues threonine 201 and histidine 234 each contribute to the (3S)-3-hydroxy-3-methylglutaryl-CoA site. The active-site Proton donor/acceptor is histidine 234. Lysine 239 is a CoA binding site. Residues arginine 243, asparagine 266, and serine 296 each coordinate (3S)-3-hydroxy-3-methylglutaryl-CoA.

The protein belongs to the thiolase-like superfamily. Archaeal HMG-CoA synthase family. Interacts with acetoacetyl-CoA thiolase that catalyzes the precedent step in the pathway and with a DUF35 protein. The acetoacetyl-CoA thiolase/HMG-CoA synthase complex channels the intermediate via a fused CoA-binding site, which allows for efficient coupling of the endergonic thiolase reaction with the exergonic HMGCS reaction.

It catalyses the reaction acetoacetyl-CoA + acetyl-CoA + H2O = (3S)-3-hydroxy-3-methylglutaryl-CoA + CoA + H(+). Its pathway is metabolic intermediate biosynthesis; (R)-mevalonate biosynthesis; (R)-mevalonate from acetyl-CoA: step 2/3. Functionally, catalyzes the condensation of acetyl-CoA with acetoacetyl-CoA to form 3-hydroxy-3-methylglutaryl-CoA (HMG-CoA). Functions in the mevalonate (MVA) pathway leading to isopentenyl diphosphate (IPP), a key precursor for the biosynthesis of isoprenoid compounds that are building blocks of archaeal membrane lipids. The protein is Hydroxymethylglutaryl-CoA synthase of Methanocella arvoryzae (strain DSM 22066 / NBRC 105507 / MRE50).